The primary structure comprises 490 residues: Adenylosuccinate synthetase 1, chloroplastic (490 aa).

A chloroplast-targeting transit peptide spans 1-47 (MSLSTLSHPAAAAAAATGSGKSHFRTAPAAQSVRFPKARPPVPAAVS). Positions 14–36 (AAATGSGKSHFRTAPAAQSVRFP) are disordered. GTP-binding positions include 77–83 (GDEGKGK) and 105–107 (GHT). D78 acts as the Proton acceptor in catalysis. Mg(2+) contacts are provided by D78 and G105. IMP-binding positions include 78-81 (DEGK), 103-106 (NAGH), T195, R209, Q289, T304, and R368. Catalysis depends on H106, which acts as the Proton donor. 364–370 (TTTGRPR) is a substrate binding site. Residues R370, 396-398 (KLD), and 479-481 (GVG) contribute to the GTP site.

The protein belongs to the adenylosuccinate synthetase family. Homodimer. Mg(2+) is required as a cofactor.

It localises to the plastid. The protein resides in the chloroplast. The catalysed reaction is IMP + L-aspartate + GTP = N(6)-(1,2-dicarboxyethyl)-AMP + GDP + phosphate + 2 H(+). The protein operates within purine metabolism; AMP biosynthesis via de novo pathway; AMP from IMP: step 1/2. In terms of biological role, plays an important role in the de novo pathway and in the salvage pathway of purine nucleotide biosynthesis. Catalyzes the first committed step in the biosynthesis of AMP from IMP. This chain is Adenylosuccinate synthetase 1, chloroplastic, found in Sorghum bicolor (Sorghum).